Consider the following 1342-residue polypeptide: Restriction of telomere capping protein 1 (1342 aa).

A disordered region spans residues 1-39 (MSLSPHVENASIPKGSTPIPKNRNVSSIGKGEFLGSSSS). WD repeat units follow at residues 207 to 248 (NKFS…SIDN), 256 to 296 (EHTR…SKSS), 305 to 342 (TASD…YKFA), 367 to 406 (AHTG…NAAE), 439 to 486 (NTDY…IPKH), and 489 to 527 (LSET…TVLE). Disordered regions lie at residues 559-593 (PELQ…IGGI), 600-619 (TGLT…GPTF), 630-651 (ASSF…ENRE), 736-766 (KNAT…DDDD), and 788-831 (LMNE…DRSR). Low complexity predominate over residues 630 to 644 (ASSFNSSSASLTSLT). The span at 753 to 766 (DDGDDDDDDDDDDD) shows a compositional bias: acidic residues. Residues 815–824 (SSISSISASR) are compositionally biased toward low complexity. The stretch at 844 to 884 (KIQTLVDLISIATHNASVYLSIDDLTNFKIWILIRDSLLWD) is one WD 7 repeat. Disordered stretches follow at residues 942 to 963 (AFRA…KLKE) and 1014 to 1047 (DEHE…PILQ). 2 stretches are compositionally biased toward basic and acidic residues: residues 952–963 (DAEKKPVSKLKE) and 1016–1028 (HEHQ…HDSP). Ser1037, Ser1081, Ser1088, Ser1090, Ser1124, and Ser1134 each carry phosphoserine. 2 WD repeats span residues 1130 to 1170 (SRPD…KQLY) and 1217 to 1256 (LFGI…LITN). The RING-type; degenerate zinc-finger motif lies at 1294–1336 (CVLCERPLKKLTMVILPCGHEGHFQCIQEWFLDENEQECPGGC).

The protein belongs to the WD repeat RTC1 family.

It is found in the vacuole. May be involved in a process influencing telomere capping. The protein is Restriction of telomere capping protein 1 (RTC1) of Saccharomyces cerevisiae (strain RM11-1a) (Baker's yeast).